A 943-amino-acid polypeptide reads, in one-letter code: Isoleucine--tRNA ligase (943 aa).

Positions 59–69 match the 'HIGH' region motif; that stretch reads PYANGRIHLGH. Glutamate 577 serves as a coordination point for L-isoleucyl-5'-AMP. The 'KMSKS' region motif lies at 618-622; that stretch reads KMSKS. Lysine 621 lines the ATP pocket. 4 residues coordinate Zn(2+): cysteine 906, cysteine 909, cysteine 926, and cysteine 929.

Belongs to the class-I aminoacyl-tRNA synthetase family. IleS type 1 subfamily. In terms of assembly, monomer. Requires Zn(2+) as cofactor.

Its subcellular location is the cytoplasm. It catalyses the reaction tRNA(Ile) + L-isoleucine + ATP = L-isoleucyl-tRNA(Ile) + AMP + diphosphate. Functionally, catalyzes the attachment of isoleucine to tRNA(Ile). As IleRS can inadvertently accommodate and process structurally similar amino acids such as valine, to avoid such errors it has two additional distinct tRNA(Ile)-dependent editing activities. One activity is designated as 'pretransfer' editing and involves the hydrolysis of activated Val-AMP. The other activity is designated 'posttransfer' editing and involves deacylation of mischarged Val-tRNA(Ile). This Stenotrophomonas maltophilia (strain R551-3) protein is Isoleucine--tRNA ligase.